A 65-amino-acid polypeptide reads, in one-letter code: Weak neurotoxin 7 (65 aa).

5 disulfides stabilise this stretch: Cys-3/Cys-24, Cys-6/Cys-11, Cys-17/Cys-42, Cys-46/Cys-57, and Cys-58/Cys-63.

It belongs to the three-finger toxin family. Ancestral subfamily. Orphan group II sub-subfamily. As to expression, expressed by the venom gland.

It localises to the secreted. Its function is as follows. Binds with low affinity to muscular (alpha-1-beta-1-delta-epsilon/CHRNA1-CHRNB1-CHRND-CHRNE) and very low affinity to neuronal (alpha-7/CHRNA7) nicotinic acetylcholine receptor (nAChR). In Naja naja (Indian cobra), this protein is Weak neurotoxin 7.